Consider the following 281-residue polypeptide: NADPH-dependent 7-cyano-7-deazaguanine reductase (281 aa).

88–90 (VES) provides a ligand contact to substrate. An NADPH-binding site is contributed by 90–91 (SK). Cysteine 189 serves as the catalytic Thioimide intermediate. Aspartate 196 serves as the catalytic Proton donor. 228–229 (HE) provides a ligand contact to substrate. 257–258 (RG) provides a ligand contact to NADPH.

Belongs to the GTP cyclohydrolase I family. QueF type 2 subfamily. As to quaternary structure, homodimer.

Its subcellular location is the cytoplasm. It catalyses the reaction 7-aminomethyl-7-carbaguanine + 2 NADP(+) = 7-cyano-7-deazaguanine + 2 NADPH + 3 H(+). It functions in the pathway tRNA modification; tRNA-queuosine biosynthesis. In terms of biological role, catalyzes the NADPH-dependent reduction of 7-cyano-7-deazaguanine (preQ0) to 7-aminomethyl-7-deazaguanine (preQ1). This is NADPH-dependent 7-cyano-7-deazaguanine reductase from Klebsiella pneumoniae (strain 342).